Consider the following 674-residue polypeptide: Early transcription factor 70 kDa subunit (674 aa).

Positions 34 to 193 (ERSLKEKKSV…KDIVELLTNE (160 aa)) constitute a Helicase ATP-binding domain. 45 to 52 (LFHKMGSG) is an ATP binding site. Positions 135–138 (YDNY) match the DEXH box motif.

The protein belongs to the helicase family. VETF subfamily. Heterodimer of a 70 kDa and a 82 kDa subunit. Part of the early transcription complex composed of ETF, RAP94, and the DNA-directed RNA polymerase.

The protein resides in the virion. Functionally, acts with RNA polymerase to initiate transcription from early gene promoters. Is recruited by the RPO-associated protein of 94 kDa (RAP94) to form the early transcription complex, which also contains the core RNA polymerase. ETF heterodimer binds to early gene promoters. This Melanoplus sanguinipes entomopoxvirus (MsEPV) protein is Early transcription factor 70 kDa subunit (VETFS).